The primary structure comprises 259 residues: ATP synthase subunit a 1 (259 aa).

5 helical membrane passes run T30–F50, L90–L110, D135–L155, L209–W229, and A230–V250.

This sequence belongs to the ATPase A chain family. As to quaternary structure, F-type ATPases have 2 components, CF(1) - the catalytic core - and CF(0) - the membrane proton channel. CF(1) has five subunits: alpha(3), beta(3), gamma(1), delta(1), epsilon(1). CF(0) has three main subunits: a(1), b(2) and c(9-12). The alpha and beta chains form an alternating ring which encloses part of the gamma chain. CF(1) is attached to CF(0) by a central stalk formed by the gamma and epsilon chains, while a peripheral stalk is formed by the delta and b chains.

It is found in the cell inner membrane. Its function is as follows. Key component of the proton channel; it plays a direct role in the translocation of protons across the membrane. The polypeptide is ATP synthase subunit a 1 (Methylococcus capsulatus (strain ATCC 33009 / NCIMB 11132 / Bath)).